A 208-amino-acid chain; its full sequence is 3-demethoxyubiquinol 3-hydroxylase (208 aa).

Residues glutamate 57, glutamate 87, histidine 90, glutamate 139, glutamate 171, and histidine 174 each contribute to the Fe cation site.

It belongs to the COQ7 family. The cofactor is Fe cation.

The protein resides in the cell membrane. It catalyses the reaction a 5-methoxy-2-methyl-3-(all-trans-polyprenyl)benzene-1,4-diol + AH2 + O2 = a 3-demethylubiquinol + A + H2O. It functions in the pathway cofactor biosynthesis; ubiquinone biosynthesis. Functionally, catalyzes the hydroxylation of 2-nonaprenyl-3-methyl-6-methoxy-1,4-benzoquinol during ubiquinone biosynthesis. The protein is 3-demethoxyubiquinol 3-hydroxylase of Burkholderia multivorans (strain ATCC 17616 / 249).